We begin with the raw amino-acid sequence, 853 residues long: Protein translocase subunit SecA 1 (853 aa).

Residues Gln-85, 103–107 (GEGKT), and Asp-492 contribute to the ATP site.

The protein belongs to the SecA family. Monomer and homodimer. Part of the essential Sec protein translocation apparatus which comprises SecA, SecYEG and auxiliary proteins SecDF. Other proteins may also be involved.

It localises to the cell membrane. The protein resides in the cytoplasm. The catalysed reaction is ATP + H2O + cellular proteinSide 1 = ADP + phosphate + cellular proteinSide 2.. Functionally, part of the Sec protein translocase complex. Interacts with the SecYEG preprotein conducting channel. Has a central role in coupling the hydrolysis of ATP to the transfer of proteins into and across the cell membrane, serving as an ATP-driven molecular motor driving the stepwise translocation of polypeptide chains across the membrane. This Corynebacterium diphtheriae (strain ATCC 700971 / NCTC 13129 / Biotype gravis) protein is Protein translocase subunit SecA 1.